The following is a 430-amino-acid chain: Trigger factor (430 aa).

The PPIase FKBP-type domain occupies 165–250 (TDIAIFDFEG…LHQIKTKKIP (86 aa)).

Belongs to the FKBP-type PPIase family. Tig subfamily.

The protein resides in the cytoplasm. It carries out the reaction [protein]-peptidylproline (omega=180) = [protein]-peptidylproline (omega=0). Its function is as follows. Involved in protein export. Acts as a chaperone by maintaining the newly synthesized protein in an open conformation. Functions as a peptidyl-prolyl cis-trans isomerase. The sequence is that of Trigger factor from Onion yellows phytoplasma (strain OY-M).